A 374-amino-acid polypeptide reads, in one-letter code: MEMO1 family protein aq_1336 (374 aa).

The protein belongs to the MEMO1 family.

In Aquifex aeolicus (strain VF5), this protein is MEMO1 family protein aq_1336.